The sequence spans 71 residues: Large ribosomal subunit protein bL31 (71 aa).

Zn(2+) is bound by residues cysteine 16, cysteine 18, cysteine 36, and cysteine 39.

Belongs to the bacterial ribosomal protein bL31 family. Type A subfamily. As to quaternary structure, part of the 50S ribosomal subunit. Zn(2+) is required as a cofactor.

In terms of biological role, binds the 23S rRNA. This Thermotoga maritima (strain ATCC 43589 / DSM 3109 / JCM 10099 / NBRC 100826 / MSB8) protein is Large ribosomal subunit protein bL31.